Consider the following 264-residue polypeptide: Apolipoprotein A-I (264 aa).

A signal peptide spans 1–18 (MKAVVLTVAVLFLTGSQA). Tandem repeats lie at residues 67 to 88 (LKLL…EQIG) and 89 to 110 (PVSQ…QEMN). The interval 67–264 (LKLLDNWDSL…DEATKKLNTQ (198 aa)) is 10 X approximate tandem repeats. At Met109 the chain carries Methionine sulfoxide. Residues 111–121 (KDLEEVKRKVQ) form a 3; half-length repeat. 3 consecutive repeat copies span residues 122–143 (PYLD…QQVE), 144–165 (PLSK…EKLS), and 166–187 (PLGQ…THLA). The stretch at 188-207 (PYSDELRQRLAARLEALKEG) is one 7; truncated repeat. Residues 208–229 (SSFAEYQAKATEHLSALGEKAK) form repeat 8. Residues 230-240 (PALEDLRQGLL) form a 9; half-length repeat. Repeat unit 10 spans residues 241–264 (PVLESLKLSFWSAVDEATKKLNTQ).

This sequence belongs to the apolipoprotein A1/A4/E family. In terms of assembly, homodimer. Interacts with APOA1BP and CLU. Component of a sperm activating protein complex (SPAP), consisting of APOA1, an immunoglobulin heavy chain, an immunoglobulin light chain and albumin. Interacts with NDRG1. Interacts with SCGB3A2. Interacts with NAXE and YJEFN3. Glycosylated. Post-translationally, palmitoylated. In terms of processing, phosphorylation sites are present in the extracellular medium.

The protein resides in the secreted. In terms of biological role, participates in the reverse transport of cholesterol from tissues to the liver for excretion by promoting cholesterol efflux from tissues and by acting as a cofactor for the lecithin cholesterol acyltransferase (LCAT). As part of the SPAP complex, activates spermatozoa motility. The protein is Apolipoprotein A-I (APOA1) of Ictidomys tridecemlineatus (Thirteen-lined ground squirrel).